Here is a 100-residue protein sequence, read N- to C-terminus: MIPLQHGLILAAILFVLGLTGLLIRRNLLFMLISLEIMINAAALAFVVAGSYWQQPDGQVMYILAITLAAAEASIGLALLLQMYRRRQTLNIDTVSEMRG.

A run of 3 helical transmembrane segments spans residues 4 to 24 (LQHGLILAAILFVLGLTGLLI), 28 to 48 (LLFMLISLEIMINAAALAFVV), and 60 to 80 (VMYILAITLAAAEASIGLALL).

This sequence belongs to the complex I subunit 4L family. NDH-1 is composed of 13 different subunits. Subunits NuoA, H, J, K, L, M, N constitute the membrane sector of the complex.

It localises to the cell inner membrane. The enzyme catalyses a quinone + NADH + 5 H(+)(in) = a quinol + NAD(+) + 4 H(+)(out). NDH-1 shuttles electrons from NADH, via FMN and iron-sulfur (Fe-S) centers, to quinones in the respiratory chain. The immediate electron acceptor for the enzyme in this species is believed to be ubiquinone. Couples the redox reaction to proton translocation (for every two electrons transferred, four hydrogen ions are translocated across the cytoplasmic membrane), and thus conserves the redox energy in a proton gradient. The chain is NADH-quinone oxidoreductase subunit K from Pectobacterium carotovorum subsp. carotovorum (strain PC1).